A 660-amino-acid polypeptide reads, in one-letter code: T-box protein H15 (660 aa).

A compositionally biased stretch (polar residues) spans 1 to 11 (MLLSNQPANTK). Disordered stretches follow at residues 1 to 72 (MLLS…NHNQ), 90 to 122 (GGNA…DDVD), and 169 to 266 (QQQQ…PKIV). A compositionally biased stretch (low complexity) spans 12-22 (PQQTPSPSQTQ). The span at 23–33 (NFKSKLQQQIV) shows a compositional bias: polar residues. Residues 35 to 47 (AAAAAAANIANGS) show a composition bias toward low complexity. The span at 48-71 (SHHHHHQNHHHHHPLNNHHNHNHN) shows a compositional bias: basic residues. Composition is skewed to low complexity over residues 93–108 (APSS…SPAS) and 169–179 (QQQQQQQQQRQ). Residues 180-198 (QTHHHATTGKQQRQHHNHH) show a composition bias toward basic residues. Residues 199-233 (SSNTNNSSNSGNSNTNSKSSSQRGRSAAAVGAAAT) are compositionally biased toward low complexity. The segment covering 234-243 (PSPPPPPPSQ) has biased composition (pro residues). Positions 286 to 472 (LWDKFHELGT…SNPFAKGFRD (187 aa)) form a DNA-binding region, T-box. The disordered stretch occupies residues 598–660 (NRTPPPSMAV…PPASNRAESP (63 aa)). Over residues 600–613 (TPPPSMAVAPPAPA) the composition is skewed to pro residues. Residues 614–624 (TPTSSCGSASP) show a composition bias toward low complexity. Residues 643–660 (QVPQHQASPPASNRAESP) are compositionally biased toward polar residues.

The protein localises to the nucleus. This is T-box protein H15 (H15) from Drosophila melanogaster (Fruit fly).